A 35-amino-acid chain; its full sequence is Conotoxin TxMEKL-0422 (35 aa).

The segment at 1–35 (NPASCCSCADVDPGRASRKTPKGEDQVFIKEKDRC) is disordered. A compositionally biased stretch (basic and acidic residues) spans 21 to 35 (PKGEDQVFIKEKDRC).

In terms of processing, contains disulfide bonds. As to expression, expressed by the venom duct.

The protein localises to the secreted. This is Conotoxin TxMEKL-0422 from Conus textile (Cloth-of-gold cone).